A 554-amino-acid polypeptide reads, in one-letter code: Valerianol synthase TPS1A (554 aa).

The Mg(2+) site is built by D307 and D311. The DDXXD motif signature appears at 326-330 (VQRWD). Mg(2+) is bound by residues D452, S456, and E460.

The protein belongs to the terpene synthase family. Mg(2+) is required as a cofactor. In terms of tissue distribution, expressed in flowers.

The catalysed reaction is (2E,6E)-farnesyl diphosphate + H2O = valerianol + diphosphate. It functions in the pathway secondary metabolite biosynthesis; terpenoid biosynthesis. In terms of biological role, terpene synthase that catalyzes the biosynthesis of the terpene valerianol, which is a volatile compound of floral scent. The sequence is that of Valerianol synthase TPS1A from Camellia hiemalis (Camellia).